The primary structure comprises 575 residues: Proline--tRNA ligase (575 aa).

Belongs to the class-II aminoacyl-tRNA synthetase family. ProS type 1 subfamily. As to quaternary structure, homodimer.

It is found in the cytoplasm. It carries out the reaction tRNA(Pro) + L-proline + ATP = L-prolyl-tRNA(Pro) + AMP + diphosphate. Functionally, catalyzes the attachment of proline to tRNA(Pro) in a two-step reaction: proline is first activated by ATP to form Pro-AMP and then transferred to the acceptor end of tRNA(Pro). As ProRS can inadvertently accommodate and process non-cognate amino acids such as alanine and cysteine, to avoid such errors it has two additional distinct editing activities against alanine. One activity is designated as 'pretransfer' editing and involves the tRNA(Pro)-independent hydrolysis of activated Ala-AMP. The other activity is designated 'posttransfer' editing and involves deacylation of mischarged Ala-tRNA(Pro). The misacylated Cys-tRNA(Pro) is not edited by ProRS. The sequence is that of Proline--tRNA ligase from Anaeromyxobacter sp. (strain Fw109-5).